We begin with the raw amino-acid sequence, 236 residues long: MATRAATKMAGKKEHQYCLLDTQEKRHGHYPFSFELKPYGQTGANIIGVQGSLTHVVKMTVFPFMIPFPLQKTRIGDFIGGRVYLFFKELDMQAFSDVNGMQYHFEFKVVPVSSSQVELLPVNNTYKFTYAIPELQYLTPIFYDLSGPLDFPLDTLSVHVDSLTHHIHLPIQNHNLTMGDRVFVSGYKHLQTIETCKNNIIFIKDIPPLSSEKINLYIPKNRIRIPLYFKSLKASK.

Belongs to the asfivirus H240R family.

The protein localises to the virion. In terms of biological role, forms the penton at the fivefold vertices of the icosahedral capsid. Together with the minor capsid proteins (p17, p49, and M1249L), forms a complicated network immediately below the outer capsid shell, stabilizing the whole capsid. The chain is Penton protein H240R from African swine fever virus (isolate Pig/Kenya/KEN-50/1950) (ASFV).